Here is a 343-residue protein sequence, read N- to C-terminus: Pseudaminic acid synthase (343 aa).

In terms of domain architecture, AFP-like spans 287–343; it reads SLYASKDIKKGEMFSEENVKSVRPSFGLHPKFYQELLGKKASKDIKFGDALKQGDFQ.

This sequence belongs to the pseudaminic acid synthase family. It depends on a divalent metal cation as a cofactor.

It carries out the reaction 2,4-diacetamido-2,4,6-trideoxy-beta-L-altrose + phosphoenolpyruvate + H2O = pseudaminate + phosphate. Functionally, catalyzes the fifth step in the biosynthesis of pseudaminic acid, a sialic-acid-like sugar that is used to modify flagellin. Catalyzes the condensation of phosphoenolpyruvate with 2,4-diacetamido-2,4,6-trideoxy-beta-l-altropyranose, forming pseudaminic acid. The chain is Pseudaminic acid synthase (pseI) from Campylobacter jejuni subsp. jejuni serotype O:2 (strain ATCC 700819 / NCTC 11168).